The chain runs to 161 residues: Low molecular weight phosphotyrosine protein phosphatase (161 aa).

Catalysis depends on Cys-14, which acts as the Nucleophile. The active-site Transition state stabilizer is the Arg-20. A Phosphoserine modification is found at Ser-57. Residue Asp-133 is the Proton donor of the active site.

It belongs to the low molecular weight phosphotyrosine protein phosphatase family.

It is found in the cytoplasm. The enzyme catalyses O-phospho-L-tyrosyl-[protein] + H2O = L-tyrosyl-[protein] + phosphate. It carries out the reaction a phosphate monoester + H2O = an alcohol + phosphate. In terms of biological role, acts on tyrosine phosphorylated proteins, low-MW aryl phosphates and natural and synthetic acyl phosphates. In Saccharomyces cerevisiae (strain ATCC 204508 / S288c) (Baker's yeast), this protein is Low molecular weight phosphotyrosine protein phosphatase.